The sequence spans 221 residues: GTP-binding nuclear protein Ran2 (221 aa).

Residues 10-174 (DYPSFKLVIV…LYLARKLAGD (165 aa)) form the Small GTPase Ran-type domain. Position 21-28 (21-28 (DGGTGKTT)) interacts with GTP. Positions 40 to 48 (KKYEPTIGV) are switch-I. Residues Gly-71, 125 to 128 (NKVD), and 153 to 155 (SAK) each bind GTP. The tract at residues 71-87 (GQEKFGGLRDGYYIHGQ) is switch-II.

It belongs to the small GTPase superfamily. Ran family. As to quaternary structure, found in a nuclear export complex with RanGTP, exportin and pre-miRNA.

The protein resides in the nucleus. Its function is as follows. GTP-binding protein involved in nucleocytoplasmic transport. Required for the import of protein into the nucleus and also for RNA export. Involved in chromatin condensation and control of cell cycle. This Solanum lycopersicum (Tomato) protein is GTP-binding nuclear protein Ran2 (RAN2).